The sequence spans 90 residues: Probable Fe(2+)-trafficking protein (90 aa).

This sequence belongs to the Fe(2+)-trafficking protein family.

Functionally, could be a mediator in iron transactions between iron acquisition and iron-requiring processes, such as synthesis and/or repair of Fe-S clusters in biosynthetic enzymes. In Pseudomonas fluorescens (strain Pf0-1), this protein is Probable Fe(2+)-trafficking protein.